The chain runs to 768 residues: Histone-lysine N-methyltransferase, H3 lysine-36 specific (768 aa).

Positions 45–90 (AEVMACDCKPGPTACDEDSGCINRLTSIECVRCCKGCQNKRFQGKK) constitute an AWS domain. In terms of domain architecture, SET spans 92–209 (ASVDVISTEK…RGEEVTFDYN (118 aa)). The Post-SET domain occupies 216-232 (EAQACYCGEKNCVGFLG). Residues 411-452 (KIDPDGDEHSVSRGTSEEVTKESSKSEEPNDVEVVKVNKKAD) are compositionally biased toward basic and acidic residues. 3 disordered regions span residues 411–508 (KIDP…KGWQ), 533–610 (KASR…VNAQ), and 680–768 (VVKR…IDLE). Over residues 453-469 (NNGNGVTDSPSTRSESP) the composition is skewed to polar residues. One can recognise a WW domain in the interval 501–534 (RSLPKGWQFANDPQGKVYYYNLELNIQQWDFPKA). Basic and acidic residues-rich tracts occupy residues 555–568 (NRRD…ETRE), 682–734 (KRLE…KGEE), and 755–768 (TVKK…IDLE).

This sequence belongs to the class V-like SAM-binding methyltransferase superfamily. Histone-lysine methyltransferase family. SET2 subfamily.

The protein resides in the nucleus. Its subcellular location is the chromosome. The catalysed reaction is L-lysyl(36)-[histone H3] + 3 S-adenosyl-L-methionine = N(6),N(6),N(6)-trimethyl-L-lysyl(36)-[histone H3] + 3 S-adenosyl-L-homocysteine + 3 H(+). Functionally, histone methyltransferase that trimethylates histone H3 'Lys-36' forming H3K36me3. Involved in transcription elongation as well as in transcription repression. This Yarrowia lipolytica (strain CLIB 122 / E 150) (Yeast) protein is Histone-lysine N-methyltransferase, H3 lysine-36 specific (set-2).